An 808-amino-acid chain; its full sequence is Protein translocase subunit SecA 2 (808 aa).

Residues glutamine 124, 142–146 (GEGKT), and aspartate 535 each bind ATP.

The protein belongs to the SecA family. In terms of assembly, monomer and homodimer. Part of the essential Sec protein translocation apparatus which comprises SecA, SecYEG and auxiliary proteins SecDF. Other proteins may also be involved.

Its subcellular location is the cell membrane. The protein resides in the cytoplasm. It carries out the reaction ATP + H2O + cellular proteinSide 1 = ADP + phosphate + cellular proteinSide 2.. Part of the Sec protein translocase complex. Interacts with the SecYEG preprotein conducting channel. Has a central role in coupling the hydrolysis of ATP to the transfer of proteins into and across the cell membrane, serving as an ATP-driven molecular motor driving the stepwise translocation of polypeptide chains across the membrane. This chain is Protein translocase subunit SecA 2, found in Mycobacterium bovis (strain BCG / Pasteur 1173P2).